Here is a 667-residue protein sequence, read N- to C-terminus: Heat shock protein DDB_G0283913 (667 aa).

2 helical membrane-spanning segments follow: residues 2 to 22 (FVGTLVIIICTTLIIIIKKIL) and 224 to 244 (MFICDMSFSLASIIVYVLNEL). Positions 18 to 82 (IKKILKRKKE…ELAKKLNCYI (65 aa)) form a coiled coil. The tract at residues 432–478 (IDDTIQDNDKSGSEVSTPTISSSSSSPLQPIIKDEKDDNIENKSDEA) is disordered. Over residues 444 to 457 (SEVSTPTISSSSSS) the composition is skewed to low complexity. Residues 463–477 (IKDEKDDNIENKSDE) show a composition bias toward basic and acidic residues. Residues 551 to 667 (MVFSSGFKPF…VITFKFEKIG (117 aa)) form the sHSP domain.

It belongs to the small heat shock protein (HSP20) family.

It is found in the membrane. The sequence is that of Heat shock protein DDB_G0283913 from Dictyostelium discoideum (Social amoeba).